A 261-amino-acid polypeptide reads, in one-letter code: 3-methyl-2-oxobutanoate hydroxymethyltransferase (261 aa).

Residues D47 and D86 each contribute to the Mg(2+) site. Residues D47 to S48, D86, and K116 each bind 3-methyl-2-oxobutanoate. Residue E118 coordinates Mg(2+). Residue E186 is the Proton acceptor of the active site.

The protein belongs to the PanB family. In terms of assembly, homodecamer; pentamer of dimers. Mg(2+) serves as cofactor.

Its subcellular location is the cytoplasm. The enzyme catalyses 3-methyl-2-oxobutanoate + (6R)-5,10-methylene-5,6,7,8-tetrahydrofolate + H2O = 2-dehydropantoate + (6S)-5,6,7,8-tetrahydrofolate. The protein operates within cofactor biosynthesis; (R)-pantothenate biosynthesis; (R)-pantoate from 3-methyl-2-oxobutanoate: step 1/2. In terms of biological role, catalyzes the reversible reaction in which hydroxymethyl group from 5,10-methylenetetrahydrofolate is transferred onto alpha-ketoisovalerate to form ketopantoate. This chain is 3-methyl-2-oxobutanoate hydroxymethyltransferase, found in Thermosynechococcus vestitus (strain NIES-2133 / IAM M-273 / BP-1).